The chain runs to 500 residues: Trehalose-6-phosphate synthase (500 aa).

Arginine 28 contributes to the D-glucose 6-phosphate binding site. 48 to 49 (GG) provides a ligand contact to UDP-alpha-D-glucose. Positions 108 and 162 each coordinate D-glucose 6-phosphate. UDP-alpha-D-glucose is bound by residues arginine 304 and lysine 309. D-glucose 6-phosphate is bound at residue arginine 342. UDP-alpha-D-glucose is bound at residue 407 to 411 (LVAKE).

It belongs to the glycosyltransferase 20 family. As to quaternary structure, homotetramer.

The catalysed reaction is ADP-alpha-D-glucose + D-glucose 6-phosphate = alpha,alpha-trehalose 6-phosphate + ADP + H(+). It carries out the reaction CDP-alpha-D-glucose + D-glucose 6-phosphate = alpha,alpha-trehalose 6-phosphate + CDP + H(+). It catalyses the reaction GDP-alpha-D-glucose + D-glucose 6-phosphate = alpha,alpha-trehalose 6-phosphate + GDP + H(+). The enzyme catalyses TDP-alpha-D-glucose + D-glucose 6-phosphate = 5-methyl-UDP + alpha,alpha-trehalose 6-phosphate + H(+). The catalysed reaction is D-glucose 6-phosphate + UDP-alpha-D-glucose = alpha,alpha-trehalose 6-phosphate + UDP + H(+). It functions in the pathway glycan biosynthesis; trehalose biosynthesis. Functionally, probably involved in the osmoprotection via the biosynthesis of trehalose and in the production of glycogen and alpha-glucan via the TreS-Pep2 branch involved in the biosynthesis of maltose-1-phosphate (M1P). Catalyzes the transfer of glucose from UDP-glucose (UDP-Glc) to D-glucose 6-phosphate (Glc-6-P) to form trehalose-6-phosphate. Probably also able to use ADP-Glc, CDP-Glc, GDP-Glc and TDP-Glc as glucosyl donors. This is Trehalose-6-phosphate synthase from Mycobacterium bovis (strain ATCC BAA-935 / AF2122/97).